The following is a 294-amino-acid chain: uncharacterized protein (294 aa).

This is an uncharacterized protein from Mycoplasma pneumoniae (strain ATCC 29342 / M129 / Subtype 1) (Mycoplasmoides pneumoniae).